A 180-amino-acid polypeptide reads, in one-letter code: Small ribosomal subunit protein uS4 (180 aa).

The 63-residue stretch at 103-165 (RRLQTIVYRK…KGSPFAKEGH (63 aa)) folds into the S4 RNA-binding domain.

Belongs to the universal ribosomal protein uS4 family. Part of the 30S ribosomal subunit. Contacts protein S5. The interaction surface between S4 and S5 is involved in control of translational fidelity.

One of the primary rRNA binding proteins, it binds directly to 16S rRNA where it nucleates assembly of the body of the 30S subunit. Functionally, with S5 and S12 plays an important role in translational accuracy. This chain is Small ribosomal subunit protein uS4, found in Thermococcus kodakarensis (strain ATCC BAA-918 / JCM 12380 / KOD1) (Pyrococcus kodakaraensis (strain KOD1)).